The following is a 221-amino-acid chain: Translation initiation factor 6 (221 aa).

It belongs to the eIF-6 family.

Binds to the 50S ribosomal subunit and prevents its association with the 30S ribosomal subunit to form the 70S initiation complex. In Methanosphaerula palustris (strain ATCC BAA-1556 / DSM 19958 / E1-9c), this protein is Translation initiation factor 6.